The primary structure comprises 452 residues: Maltoporin (452 aa).

An N-terminal signal peptide occupies residues 1–25 (MMITLRKLPLAVAVAAGVMSAQAMA).

The protein belongs to the porin LamB (TC 1.B.3) family. In terms of assembly, homotrimer formed of three 18-stranded antiparallel beta-barrels, containing three independent channels.

It is found in the cell outer membrane. The enzyme catalyses beta-maltose(in) = beta-maltose(out). Functionally, involved in the transport of maltose and maltodextrins. The polypeptide is Maltoporin (Salmonella agona (strain SL483)).